Here is a 367-residue protein sequence, read N- to C-terminus: NADH-quinone oxidoreductase subunit D (367 aa).

It belongs to the complex I 49 kDa subunit family. NDH-1 is composed of 14 different subunits. Subunits NuoB, C, D, E, F, and G constitute the peripheral sector of the complex.

Its subcellular location is the cell membrane. It carries out the reaction a quinone + NADH + 5 H(+)(in) = a quinol + NAD(+) + 4 H(+)(out). Its function is as follows. NDH-1 shuttles electrons from NADH, via FMN and iron-sulfur (Fe-S) centers, to quinones in the respiratory chain. The immediate electron acceptor for the enzyme in this species is believed to be ubiquinone. Couples the redox reaction to proton translocation (for every two electrons transferred, four hydrogen ions are translocated across the cytoplasmic membrane), and thus conserves the redox energy in a proton gradient. This is NADH-quinone oxidoreductase subunit D from Dehalococcoides mccartyi (strain ATCC BAA-2266 / KCTC 15142 / 195) (Dehalococcoides ethenogenes (strain 195)).